The primary structure comprises 267 residues: L-aspartate dehydrogenase (267 aa).

Residues A124 and N190 each coordinate NAD(+). H218 is an active-site residue.

Belongs to the L-aspartate dehydrogenase family.

The catalysed reaction is L-aspartate + NADP(+) + H2O = oxaloacetate + NH4(+) + NADPH + H(+). It carries out the reaction L-aspartate + NAD(+) + H2O = oxaloacetate + NH4(+) + NADH + H(+). It participates in cofactor biosynthesis; NAD(+) biosynthesis; iminoaspartate from L-aspartate (dehydrogenase route): step 1/1. Its function is as follows. Specifically catalyzes the NAD or NADP-dependent dehydrogenation of L-aspartate to iminoaspartate. The polypeptide is L-aspartate dehydrogenase (Methanocaldococcus jannaschii (strain ATCC 43067 / DSM 2661 / JAL-1 / JCM 10045 / NBRC 100440) (Methanococcus jannaschii)).